The primary structure comprises 307 residues: Ubiquitin recognition factor in ER-associated degradation protein 1 (307 aa).

Position 1 is an N-acetylmethionine (Met1). Ser129, Ser231, Ser245, Ser247, and Ser299 each carry phosphoserine. Disordered regions lie at residues 230–255 and 288–307; these read GSGN…GDIK and GRFI…GRKP.

It belongs to the UFD1 family. Heterodimer with NPLOC4, this heterodimer binds VCP and inhibits Golgi membrane fusion. Interacts with USP13. Interacts with ZFAND2B; probably through VCP.

It localises to the nucleus. The protein resides in the cytoplasm. The protein localises to the cytosol. Its pathway is protein degradation; proteasomal ubiquitin-dependent pathway. Its function is as follows. Essential component of the ubiquitin-dependent proteolytic pathway which degrades ubiquitin fusion proteins. The ternary complex containing UFD1, VCP and NPLOC4 binds ubiquitinated proteins and is necessary for the export of misfolded proteins from the ER to the cytoplasm, where they are degraded by the proteasome. The NPLOC4-UFD1-VCP complex regulates spindle disassembly at the end of mitosis and is necessary for the formation of a closed nuclear envelope. It may be involved in the development of some ectoderm-derived structures. Acts as a negative regulator of type I interferon production via the complex formed with VCP and NPLOC4, which binds to RIGI and recruits RNF125 to promote ubiquitination and degradation of RIGI. This Mus musculus (Mouse) protein is Ubiquitin recognition factor in ER-associated degradation protein 1.